The primary structure comprises 570 residues: MKLSNMLVSTLREVPAEAEIPSHKLMLRAGMMRKMASGVYNFMPFGLRVIKKIEDIVREEMDNAGAQEFLASALLPSELWKESGRWDVFGPEMFRLQDRNNREFCLGPTHEEVFTDIARNEINSYKQLPLNLYQIQTKYRDERRPRFGLMRSREFIMKDAYSFDKDYEDLDVSYKKMYEAYHNIFIRCGLECNCVEADSGAMGGAGSAEFMVKSEVGEDEIAFCDSCGYGANIEKAPAISEKFDQEELKELAKIETPNVKTIDQLIKFLEINPAKLVKTLIYKVDDKVVAVAIRGDREANEIKIINALGGAVNFEMADEETIKKATNSEVGFAGPIGIKVDCLLIDEEVTNMYNFIIGANETGYHYKNANYKRDFEGIVGDYRKVIQGDKCPLCGGNIEIARGIEVGHIFKLGTKYSESMGANFLDEKGESRPLVMGCYGIGVSRTMAAAIEQNHDENGIVWPLSIAPYHVIVVPVITKDEEQMKAAEEIYNKLKSMGVEVLLDDRAERPGVKFKDADLIGIPIRVTVGKKIKEGKVEYKLRKEEDLEILNIEQVYDKVREEFEKSSLKL.

Belongs to the class-II aminoacyl-tRNA synthetase family. ProS type 1 subfamily. Homodimer.

The protein resides in the cytoplasm. The enzyme catalyses tRNA(Pro) + L-proline + ATP = L-prolyl-tRNA(Pro) + AMP + diphosphate. In terms of biological role, catalyzes the attachment of proline to tRNA(Pro) in a two-step reaction: proline is first activated by ATP to form Pro-AMP and then transferred to the acceptor end of tRNA(Pro). As ProRS can inadvertently accommodate and process non-cognate amino acids such as alanine and cysteine, to avoid such errors it has two additional distinct editing activities against alanine. One activity is designated as 'pretransfer' editing and involves the tRNA(Pro)-independent hydrolysis of activated Ala-AMP. The other activity is designated 'posttransfer' editing and involves deacylation of mischarged Ala-tRNA(Pro). The misacylated Cys-tRNA(Pro) is not edited by ProRS. This chain is Proline--tRNA ligase, found in Clostridium tetani (strain Massachusetts / E88).